The primary structure comprises 185 residues: Ribosome-recycling factor (185 aa).

Belongs to the RRF family.

Its subcellular location is the cytoplasm. In terms of biological role, responsible for the release of ribosomes from messenger RNA at the termination of protein biosynthesis. May increase the efficiency of translation by recycling ribosomes from one round of translation to another. This chain is Ribosome-recycling factor, found in Corynebacterium efficiens (strain DSM 44549 / YS-314 / AJ 12310 / JCM 11189 / NBRC 100395).